Here is a 362-residue protein sequence, read N- to C-terminus: Neisseria adhesin A (362 aa).

The signal sequence occupies residues 1-23 (MKHFPSKVLTTAILATFCSGALA). The interval 24–169 (ATSDDDVKKA…NIVKIDEKLE (146 aa)) is head domain. Coiled-coil stretches lie at residues 90-146 (VTNL…LNKL) and 183-288 (NDIA…KETR). Residues 170–307 (AVADTVDKHA…SGLFQPYNVG (138 aa)) form a coiled stalk domain region. 4 consecutive transmembrane segments (beta stranded) span residues 307 to 317 (GRFNVTAAVGG), 321 to 332 (ESAVAIGTGFRF), 339 to 345 (KAGVAVG), and 351 to 362 (SAAYHVGVNYEW). The segment at 308 to 362 (RFNVTAAVGGYKSESAVAIGTGFRFTENFAAKAGVAVGTSSGSSAAYHVGVNYEW) is translocator domain.

This sequence belongs to the autotransporter-2 (AT-2) (TC 1.B.40) family. In terms of assembly, forms high molecular weight oligomers in whole cell extracts that are not disrupted by boiling in SDS buffer. Homotrimer. A fragment containing the N-terminal half of the mature protein (residues 24-210, head domain plus part of the stalk) binds human integrin beta-1 (ITGB1). It was not seen to bind immobilized purified CEACAMs 1, 3, 5, 6 or 8 nor commercially prepared type I collagen, fibronectin or matrigel.

The protein resides in the cell surface. It localises to the cell outer membrane. Adheres to and induces bacterial uptake by human epithelial cells. Upon expression in engineered Y.enterocolitica confers an 11- to 15-fold increase in bacterial adherence and uptake by human epithelial cell lines; part of the uptake is mediated by integrin beta-1 (ITGB1) suggesting it may be a human receptor for NadA. A bacterial cell surface protein; antisera against this protein induce complement-mediated killing of this and other strains. In Neisseria meningitidis serogroup B (strain ATCC BAA-335 / MC58), this protein is Neisseria adhesin A.